Consider the following 38-residue polypeptide: Large ribosomal subunit protein bL36 (38 aa).

Belongs to the bacterial ribosomal protein bL36 family.

The sequence is that of Large ribosomal subunit protein bL36 from Pseudoalteromonas atlantica (strain T6c / ATCC BAA-1087).